We begin with the raw amino-acid sequence, 723 residues long: Catalase-peroxidase (723 aa).

A cross-link (tryptophyl-tyrosyl-methioninium (Trp-Tyr) (with M-251)) is located at residues 97-225 (WHAAGSYRVT…LAAVQMGLIY (129 aa)). H98 functions as the Proton acceptor in the catalytic mechanism. The segment at residues 225–251 (YVNPEGVNGKSDPLATAAQMRETFARM) is a cross-link (tryptophyl-tyrosyl-methioninium (Tyr-Met) (with W-97)). Residue H266 participates in heme b binding.

This sequence belongs to the peroxidase family. Peroxidase/catalase subfamily. As to quaternary structure, homodimer or homotetramer. It depends on heme b as a cofactor. Formation of the three residue Trp-Tyr-Met cross-link is important for the catalase, but not the peroxidase activity of the enzyme.

The catalysed reaction is H2O2 + AH2 = A + 2 H2O. It catalyses the reaction 2 H2O2 = O2 + 2 H2O. Functionally, bifunctional enzyme with both catalase and broad-spectrum peroxidase activity. Involved in tumorigenesis. This Rhizobium radiobacter (Agrobacterium tumefaciens) protein is Catalase-peroxidase.